Here is a 530-residue protein sequence, read N- to C-terminus: 2,3-bisphosphoglycerate-independent phosphoglycerate mutase (530 aa).

Mn(2+) is bound by residues Asp-15 and Ser-65. Catalysis depends on Ser-65, which acts as the Phosphoserine intermediate. Substrate contacts are provided by residues His-126, 155-156 (RD), Arg-187, Arg-193, 257-260 (RPDR), and Lys-330. Residues Asp-397, His-401, Asp-438, His-439, and His-456 each contribute to the Mn(2+) site.

Belongs to the BPG-independent phosphoglycerate mutase family. In terms of assembly, monomer. The cofactor is Mn(2+).

It carries out the reaction (2R)-2-phosphoglycerate = (2R)-3-phosphoglycerate. The protein operates within carbohydrate degradation; glycolysis; pyruvate from D-glyceraldehyde 3-phosphate: step 3/5. In terms of biological role, catalyzes the interconversion of 2-phosphoglycerate and 3-phosphoglycerate. The sequence is that of 2,3-bisphosphoglycerate-independent phosphoglycerate mutase from Synechococcus sp. (strain JA-2-3B'a(2-13)) (Cyanobacteria bacterium Yellowstone B-Prime).